The following is a 476-amino-acid chain: Cys-Gly metallodipeptidase dug1 (476 aa).

Histidine 99 provides a ligand contact to Zn(2+). Residue aspartate 101 is part of the active site. Aspartate 133 contacts Zn(2+). Glutamate 167 functions as the Proton acceptor in the catalytic mechanism. 3 residues coordinate Zn(2+): glutamate 168, aspartate 196, and histidine 446.

It belongs to the peptidase M20A family. Homodimer. Component of the GSH degradosomal complex. Zn(2+) serves as cofactor. It depends on Mn(2+) as a cofactor.

The protein resides in the cytoplasm. Functionally, catalytic component of the GSH degradosomal complex involved in the degradation of glutathione (GSH) and other peptides containing a gamma-glu-X bond. Has a Gly-Cys dipeptidase activity. This is Cys-Gly metallodipeptidase dug1 (dug1) from Schizosaccharomyces pombe (strain 972 / ATCC 24843) (Fission yeast).